The chain runs to 69 residues: Small, acid-soluble spore protein A (69 aa).

This sequence belongs to the alpha/beta-type SASP family.

In terms of biological role, SASP are bound to spore DNA. They are double-stranded DNA-binding proteins that cause DNA to change to an a-like conformation. They protect the DNA backbone from chemical and enzymatic cleavage and are thus involved in dormant spore's high resistance to UV light. In Bacillus subtilis (strain 168), this protein is Small, acid-soluble spore protein A (sspA).